The primary structure comprises 173 residues: Terpene cyclase subB (173 aa).

Helical transmembrane passes span 11 to 31 (PGYLEVAWIADTCKLLMGLGW), 51 to 71 (ALMPLCCNFAWELTYAVIYPF), 112 to 132 (LPFIFIICIAAWTTAHLALAL), and 141 to 161 (AFSAYGCQLLLSVGALCQLLS).

Belongs to the paxB family.

It localises to the membrane. It functions in the pathway secondary metabolite biosynthesis; terpenoid biosynthesis. Functionally, terpene cyclase; part of the gene cluster that mediates the biosynthesis of the immunosuppressants subglutinols, meroterpenoids consisting of an alpha-pyrone (4-hydroxy-5,6-dimethyl-2-pyrone) moiety attached to a decalin core fused to a five-membered cyclic ether carrying a prenylside chain. The first step of the pathway is the synthesis of the alpha-pyrone moiety by the polyketide synthase subA via condensation of one acetyl-CoA starter unit with 3 malonyl-CoA units and 2 methylations. The alpha-pyrone is then combined with geranylgeranyl pyrophosphate (GGPP) formed by the GGPP synthase subD through the action of the prenyltransferase subC to yield a linear alpha-pyrone diterpenoid. Subsequent steps in the subglutinol biosynthetic pathway involve the decalin core formation, which is thought to be initiated by the epoxidation of the C10-C11 olefin by the FAD-dependent oxidoreductase subE. The following cyclization cascade would be catalyzed by the terpene cyclase subB. Lastly, the FAD-dependent dehydrogenase subF probably catalyzes the five-membered cyclic ether formation to complete the formation of subglutinol A. Subsequent redox reactions appear to give rise to subglutinol C and D, however, it remains unclear which enzymes are responsible for these transformations. SubD may have secondary function in the conversion of the identified subglutinols to subglutinol analog 45, which seems to be the major product of the cluster. The protein is Terpene cyclase subB of Metarhizium robertsii (strain ARSEF 23 / ATCC MYA-3075) (Metarhizium anisopliae (strain ARSEF 23)).